Reading from the N-terminus, the 79-residue chain is Suppressor of tumorigenicity 20 protein (79 aa).

Expressed in leukocytes, lung, spleen, liver, heart, kidney, muscle and uterine cervix. Down-regulated in cervical cancer.

May act as a tumor suppressor. Promotes apoptosis of cancer cells. This Homo sapiens (Human) protein is Suppressor of tumorigenicity 20 protein (ST20).